Consider the following 397-residue polypeptide: UDP-galactose translocator (397 aa).

The disordered stretch occupies residues 1-21; it reads MAAVGSGGSNAAAGPGAVSAG. Helical transmembrane passes span 3–23, 37–57, 65–85, 97–117, 140–160, 169–189, 200–220, 238–258, 269–289, and 315–335; these read AVGS…AGSL, YISL…IRYA, FFAT…CLLL, LALF…KLAV, TFQV…VLML, WASL…QAGG, GAGL…GVYF, LGLF…GTAV, PAVW…AVVV, and LFGF…IGAV. Low complexity predominate over residues 9-21; sequence SNAAAGPGAVSAG. The tract at residues 355-397 is disordered; the sequence is ASASTSGPCTHQQPPGQPPPPKLSSHRADLSTEPFLPKSVLVK.

Belongs to the nucleotide-sugar transporter family. SLC35A subfamily. In terms of assembly, interacts with SLC35A3; the interaction is reduced in the presence of SLC35A4. Found in a complex with SLC35A3 and SLC35A4.

It is found in the golgi apparatus membrane. It catalyses the reaction UMP(out) + UDP-alpha-D-galactose(in) = UMP(in) + UDP-alpha-D-galactose(out). The enzyme catalyses UDP-N-acetyl-alpha-D-galactosamine(in) + UMP(out) = UDP-N-acetyl-alpha-D-galactosamine(out) + UMP(in). The catalysed reaction is UMP(out) + UDP-alpha-D-glucose(in) = UMP(in) + UDP-alpha-D-glucose(out). It carries out the reaction UMP(out) + UDP-N-acetyl-alpha-D-glucosamine(in) = UMP(in) + UDP-N-acetyl-alpha-D-glucosamine(out). It catalyses the reaction UDP-alpha-D-galactose(in) + AMP(out) = UDP-alpha-D-galactose(out) + AMP(in). The enzyme catalyses UDP-alpha-D-galactose(in) + CMP(out) = UDP-alpha-D-galactose(out) + CMP(in). The catalysed reaction is UDP-N-acetyl-alpha-D-galactosamine(out) + UDP-alpha-D-galactose(in) = UDP-N-acetyl-alpha-D-galactosamine(in) + UDP-alpha-D-galactose(out). It carries out the reaction UDP-N-acetyl-alpha-D-glucosamine(out) + UDP-alpha-D-galactose(in) = UDP-N-acetyl-alpha-D-glucosamine(in) + UDP-alpha-D-galactose(out). It catalyses the reaction UDP-alpha-D-galactose(in) + UDP-alpha-D-glucose(out) = UDP-alpha-D-galactose(out) + UDP-alpha-D-glucose(in). The enzyme catalyses UMP(out) + CMP(in) = UMP(in) + CMP(out). The catalysed reaction is UMP(out) + AMP(in) = UMP(in) + AMP(out). In terms of biological role, transports uridine diphosphate galactose (UDP-galactose) from the cytosol into the Golgi apparatus, functioning as an antiporter that exchanges UDP-galactose for UMP. It is also able to exchange UDP-galactose for AMP and CMP, and to transport UDP-N-acetylgalactosamine (UDP-GalNAc) and other nucleotide sugars. As a provider of UDP-galactose to galactosyltransferases present in the Golgi apparatus, it is necessary for globotriaosylceramide/globoside (Gb3Cer) synthesis from lactosylceramide. The protein is UDP-galactose translocator of Canis lupus familiaris (Dog).